The primary structure comprises 1147 residues: Nitric oxide synthase, inducible (1147 aa).

Residues Lys22–Asn51 are disordered. The DINNN-motif; mediates interaction with SPSB1, SPSB2 and SPSB4 motif lies at Asp23–Asn27. The Zn(2+) site is built by Cys107 and Cys112. Position 115 (Ser115) interacts with (6R)-L-erythro-5,6,7,8-tetrahydrobiopterin. Cys197 provides a ligand contact to heme b. L-arginine contacts are provided by Gln260, Trp369, Tyr370, and Glu374. (6R)-L-erythro-5,6,7,8-tetrahydrobiopterin is bound by residues Arg378, Ile459, Trp460, and Phe473. Residue Tyr488 participates in heme b binding. Residues Phe512–Ser532 form a calmodulin-binding region. Residues Ala536 to Phe674 form the Flavodoxin-like domain. FMN contacts are provided by Thr542, Glu543, Thr544, Lys546, and Ser547. At Thr564 the chain carries Phosphothreonine. Residue Tyr572 is modified to Phosphotyrosine. Positions 588, 589, 625, 632, 658, and 662 each coordinate FMN. The FAD-binding FR-type domain maps to Lys727 to Pro967. Arg747 is an NADP(+) binding site. 6 residues coordinate FAD: His769, Arg903, Tyr905, Ser906, Thr921, and Ala923. Thr926 is a binding site for NADP(+). Positions 927, 940, 941, and 942 each coordinate FAD. NADP(+) contacts are provided by Thr981, Arg1014, Ser1043, Arg1044, Lys1050, Tyr1052, Gln1054, and Asp1087.

It belongs to the NOS family. As to quaternary structure, homodimer. Interacts with NHERF1. Interacts with GAPDH; induced by oxidatively-modified low-densitity lipoprotein (LDL(ox)). Interacts with S100A8 and S100A9 to form the iNOS-S100A8/9 transnitrosylase complex. Interacts with SPSB1, SPSB2 and SPSB4. Interacts with ELOC and CUL5 in the presence of SPSB1 or SPSB2 or SPSB4. Forms a complex with ASL, ASS1 and HSP90AA1; the complex regulates cell-autonomous L-arginine synthesis and citrulline recycling while channeling extracellular L-arginine to nitric oxide synthesis pathway. Heme b is required as a cofactor. Requires FAD as cofactor. FMN serves as cofactor. It depends on (6R)-L-erythro-5,6,7,8-tetrahydrobiopterin as a cofactor. Post-translationally, polyubiquitinated; mediated by SPSB1, SPSB2 and SPSB4, leading to proteasomal degradation. As to expression, in normal kidney, expressed primarily in the medullary thick ascending limb, with minor amounts in the medullary collecting duct and vasa recta bundle.

The protein resides in the cytoplasm. The protein localises to the cytosol. It carries out the reaction 2 L-arginine + 3 NADPH + 4 O2 + H(+) = 2 L-citrulline + 2 nitric oxide + 3 NADP(+) + 4 H2O. Not stimulated by calcium/calmodulin. Aspirin inhibits expression and function of this enzyme and effects may be exerted at the level of translational/post-translational modification and directly on the catalytic activity. Functionally, produces nitric oxide (NO) which is a messenger molecule with diverse functions throughout the body. In macrophages, NO mediates tumoricidal and bactericidal actions. Also has nitrosylase activity and mediates cysteine S-nitrosylation of cytoplasmic target proteins such PTGS2/COX2. As component of the iNOS-S100A8/9 transnitrosylase complex involved in the selective inflammatory stimulus-dependent S-nitrosylation of GAPDH implicated in regulation of the GAIT complex activity and probably multiple targets including ANXA5, EZR, MSN and VIM. Involved in inflammation, enhances the synthesis of pro-inflammatory mediators such as IL6 and IL8. The protein is Nitric oxide synthase, inducible (Nos2) of Rattus norvegicus (Rat).